We begin with the raw amino-acid sequence, 156 residues long: Cytochrome c-type biogenesis protein CcmE 1 (156 aa).

The Cytoplasmic segment spans residues 1–8 (MNATRKQR). The helical; Signal-anchor for type II membrane protein transmembrane segment at 9-29 (LCLVIGVLAAAALAVTLIVFA) threads the bilayer. At 30–156 (LQRNMSYLFT…ATAAPLTTPR (127 aa)) the chain is on the periplasmic side. His123 and Tyr127 together coordinate heme.

Belongs to the CcmE/CycJ family.

It is found in the cell inner membrane. Heme chaperone required for the biogenesis of c-type cytochromes. Transiently binds heme delivered by CcmC and transfers the heme to apo-cytochromes in a process facilitated by CcmF and CcmH. In Xanthomonas oryzae pv. oryzae (strain MAFF 311018), this protein is Cytochrome c-type biogenesis protein CcmE 1.